Consider the following 177-residue polypeptide: Large ribosomal subunit protein uL10 (177 aa).

The protein belongs to the universal ribosomal protein uL10 family. In terms of assembly, part of the ribosomal stalk of the 50S ribosomal subunit. The N-terminus interacts with L11 and the large rRNA to form the base of the stalk. The C-terminus forms an elongated spine to which L12 dimers bind in a sequential fashion forming a multimeric L10(L12)X complex.

Its function is as follows. Forms part of the ribosomal stalk, playing a central role in the interaction of the ribosome with GTP-bound translation factors. The polypeptide is Large ribosomal subunit protein uL10 (Leptospira biflexa serovar Patoc (strain Patoc 1 / Ames)).